Consider the following 353-residue polypeptide: UDP-N-acetylglucosamine--N-acetylmuramyl-(pentapeptide) pyrophosphoryl-undecaprenol N-acetylglucosamine transferase (353 aa).

UDP-N-acetyl-alpha-D-glucosamine-binding positions include Asn123, Arg161, Ser189, Ile243, 262–267 (ALTVSE), and Gln287.

Belongs to the glycosyltransferase 28 family. MurG subfamily.

It localises to the cell membrane. It carries out the reaction di-trans,octa-cis-undecaprenyl diphospho-N-acetyl-alpha-D-muramoyl-L-alanyl-D-glutamyl-meso-2,6-diaminopimeloyl-D-alanyl-D-alanine + UDP-N-acetyl-alpha-D-glucosamine = di-trans,octa-cis-undecaprenyl diphospho-[N-acetyl-alpha-D-glucosaminyl-(1-&gt;4)]-N-acetyl-alpha-D-muramoyl-L-alanyl-D-glutamyl-meso-2,6-diaminopimeloyl-D-alanyl-D-alanine + UDP + H(+). It participates in cell wall biogenesis; peptidoglycan biosynthesis. Its function is as follows. Cell wall formation. Catalyzes the transfer of a GlcNAc subunit on undecaprenyl-pyrophosphoryl-MurNAc-pentapeptide (lipid intermediate I) to form undecaprenyl-pyrophosphoryl-MurNAc-(pentapeptide)GlcNAc (lipid intermediate II). This chain is UDP-N-acetylglucosamine--N-acetylmuramyl-(pentapeptide) pyrophosphoryl-undecaprenol N-acetylglucosamine transferase, found in Buchnera aphidicola subsp. Baizongia pistaciae (strain Bp).